The sequence spans 1665 residues: MVGANASSISTQYYKLAHLGSISYTIYTSSDNNDQALLELELTIRHKWPQILVTYYNKSLYYFVFGHNKVDSETIDLTKEFPQLSTKYTDTVNVDQFPNPHKSTKNDDNLAWASLSFLKATKKMILYNLSLSGAIKLFGNYCVAPTGDSVYSILCIDPILFQNGDLVVSCVEKPFTQLFSSSVAYPRNLAIDTNFVIYLIPSGIRCHLFDPTSLRNNLIEKPQIENGKLLELLKITTGVQCDESTLWVKLIPNLKHLNNQTSAIGKFIHSVENKKFILWPWDLCLLQFGKFEPAIEEEGLLESSELNNPLHLISDFLDFRIAHNTQLQQQRDSLSDQQQGETVNVPLSAGSVHATGANSFGNVPDISKDVDTVGLSTTTPIETDLFNLQNTEEFFKNDSIHMNLEDQIHKKETEPENESENDMEIDDLFGGDESDDNDDLEEAGNEEEKPTPSNNTIDKNGVIGNALEEAFIADATPSKENINLDSKIMPPDSTSEEAVPDKENFKPKETKPSYIDILKDKMTIEKIVNSPDYKDPGAPLPVVPTPLVSSTVSQSAVTTNPPSVGSAPGPAPGPAPGTETLYEANNAYAQSSQISQLPQQKSAFSPILFNPIIKSDIDTKYGKGGKFYVAKDSSTNGNLDMKNRSLRATSVSGMEIPFSSEDKKRLQQNLEVLDSSTTSDNEGGEDIEDDDNDYEDEGDDDEEEEGEEEEEEESDEDEISDIGKSTPLKLNTQNESVPPQQSNYNPVNITDSGSNTTNNITDKQGYENTEGFGTPFPNQISKYSIKPESPFASNELQSSVSPMYFDTSQSHQSPQLQPSTGTLEVLKASSLESPSKISESSNYLPLILRSINVSTIPSSYLMNNLISSKLLPSFTISDDDLENDLDITKSNEMIVKLGFLKEFLDFMSPNIIFDLGLMKNDESDYYINGVNDLLLNSDPGISSDWILNSLSKVFPCTYPMKLIELLYDFKSLELEDQLDSQLNFLNEIADEEDFVGPKALYRKLKALEWDSFSLNESNKTSFEKYKNVMEKLSAENTVSDDDYFKLPMVKTRILKNGNIVNLNNIGLKFWKYLNFSPVKKQKDFQILLIAETHRNTASYATEFLDQIIQNYKECNFGTISKVNLSTVETRSDLEPISDGLVLVHKEHDQSYNDFYIQTNKKLISLVELIKLDLINKTNNFEFGKPLLLFFIDFNDSSNSNVQVCKIFRNFKVALTTHQLPLVDIFTKIVPSSLLVKKVHHETALKVFSNYKLTKISMNLYNECPNDLANKSIVKNLFTTIVKDPPSKIQFKFMNSSYRDNSSNDDIFLHLAYERSIDNSWFVASWSDPLGRVVHVKSWYCSDSVSKSEKSTYRGDIMDIMSITDDIWSISTDLFKVLNDELGSFGGKKFLVLTRINSIIPDVELVHWKRLSSKHKEISLIVVSVRQTPRIVGSNESEDLGPKSNDYAPTPMIQDKDIFFGFKQTFSTSNTSSPSASGGALVTSPNSLSLHSPQQFLNAPANFLSPQDLIAPTSSGISGAKPGSSGIDPEVVLENQDNEVYGVIPKVPLPSFNSPTRFCMKTGYLMMQVNQPSEEEYKDDIKKTYLVYEINLLSCSNYWNLDVLMKLIMSQYKQMIALNDILCMNPIVGESDILGTHSRNNAIVPWHINAVGKLLDYLVHIYVDKD.

Disordered regions lie at residues 411-460, 482-512, 551-580, and 673-781; these read KETE…IDKN, INLD…ETKP, TVSQ…GTET, and LDSS…NQIS. Acidic residues predominate over residues 415–445; the sequence is PENESENDMEIDDLFGGDESDDNDDLEEAGN. The segment covering 499-512 has biased composition (basic and acidic residues); that stretch reads VPDKENFKPKETKP. Residues 551 to 568 are compositionally biased toward low complexity; sequence TVSQSAVTTNPPSVGSAP. Residues 682 to 720 show a composition bias toward acidic residues; sequence EGGEDIEDDDNDYEDEGDDDEEEEGEEEEEEESDEDEIS. Positions 728 to 762 are enriched in polar residues; the sequence is LKLNTQNESVPPQQSNYNPVNITDSGSNTTNNITD.

Belongs to the Mediator complex subunit 13 family. Component of the SRB8-11 complex, which itself associates with the Mediator complex.

Its subcellular location is the nucleus. Its function is as follows. Component of the SRB8-11 complex. The SRB8-11 complex is a regulatory module of the Mediator complex which is itself involved in regulation of basal and activated RNA polymerase II-dependent transcription. The SRB8-11 complex may be involved in the transcriptional repression of a subset of genes regulated by Mediator. It may inhibit the association of the Mediator complex with RNA polymerase II to form the holoenzyme complex. In Candida albicans (strain SC5314 / ATCC MYA-2876) (Yeast), this protein is Mediator of RNA polymerase II transcription subunit 13 (SSN2).